We begin with the raw amino-acid sequence, 190 residues long: Glutamyl-tRNA(Gln) amidotransferase subunit F, mitochondrial (190 aa).

This sequence belongs to the GatF family. In terms of assembly, subunit of the heterotrimeric GatFAB amidotransferase (AdT) complex, composed of A, B and F subunits.

It localises to the mitochondrion inner membrane. The catalysed reaction is L-glutamyl-tRNA(Gln) + L-glutamine + ATP + H2O = L-glutaminyl-tRNA(Gln) + L-glutamate + ADP + phosphate + H(+). Functionally, allows the formation of correctly charged Gln-tRNA(Gln) through the transamidation of misacylated Glu-tRNA(Gln) in the mitochondria. The reaction takes place in the presence of glutamine and ATP through an activated gamma-phospho-Glu-tRNA(Gln). Required for proper protein synthesis within the mitochondrion. This chain is Glutamyl-tRNA(Gln) amidotransferase subunit F, mitochondrial, found in Eremothecium gossypii (strain ATCC 10895 / CBS 109.51 / FGSC 9923 / NRRL Y-1056) (Yeast).